A 356-amino-acid chain; its full sequence is Histidinol-phosphate aminotransferase 2 (356 aa).

Lysine 217 bears the N6-(pyridoxal phosphate)lysine mark.

It belongs to the class-II pyridoxal-phosphate-dependent aminotransferase family. Histidinol-phosphate aminotransferase subfamily. In terms of assembly, homodimer. Pyridoxal 5'-phosphate serves as cofactor.

The catalysed reaction is L-histidinol phosphate + 2-oxoglutarate = 3-(imidazol-4-yl)-2-oxopropyl phosphate + L-glutamate. It participates in amino-acid biosynthesis; L-histidine biosynthesis; L-histidine from 5-phospho-alpha-D-ribose 1-diphosphate: step 7/9. The polypeptide is Histidinol-phosphate aminotransferase 2 (Burkholderia pseudomallei (strain 1710b)).